Reading from the N-terminus, the 877-residue chain is Leucine--tRNA ligase (877 aa).

Positions 43–53 match the 'HIGH' region motif; it reads PYPSGRIHMGH. Residues 628–632 carry the 'KMSKS' region motif; sequence KMSKS. An ATP-binding site is contributed by lysine 631.

It belongs to the class-I aminoacyl-tRNA synthetase family.

The protein localises to the cytoplasm. It catalyses the reaction tRNA(Leu) + L-leucine + ATP = L-leucyl-tRNA(Leu) + AMP + diphosphate. The protein is Leucine--tRNA ligase of Brucella abortus (strain S19).